Here is a 131-residue protein sequence, read N- to C-terminus: Profilin-8 (131 aa).

Cysteines 13 and 115 form a disulfide. The Involved in PIP2 interaction signature appears at 81–97 (AVIRGKKGAGGITIKKT). Position 111 is a phosphothreonine (Thr111).

This sequence belongs to the profilin family. Occurs in many kinds of cells as a complex with monomeric actin in a 1:1 ratio. Post-translationally, phosphorylated by MAP kinases.

The protein localises to the cytoplasm. It localises to the cytoskeleton. Functionally, binds to actin and affects the structure of the cytoskeleton. At high concentrations, profilin prevents the polymerization of actin, whereas it enhances it at low concentrations. In Olea europaea (Common olive), this protein is Profilin-8.